The primary structure comprises 457 residues: Trigger factor (457 aa).

The PPIase FKBP-type domain occupies 162–243; the sequence is GDFVSIDLSA…VQTVKERELP (82 aa). The segment at 434–457 is disordered; that stretch reads AELFGSSEDETEADASDSAESEDK. Over residues 440–457 the composition is skewed to acidic residues; that stretch reads SEDETEADASDSAESEDK.

It belongs to the FKBP-type PPIase family. Tig subfamily.

It is found in the cytoplasm. It catalyses the reaction [protein]-peptidylproline (omega=180) = [protein]-peptidylproline (omega=0). Functionally, involved in protein export. Acts as a chaperone by maintaining the newly synthesized protein in an open conformation. Functions as a peptidyl-prolyl cis-trans isomerase. The polypeptide is Trigger factor (Rhodococcus erythropolis (strain PR4 / NBRC 100887)).